The chain runs to 172 residues: Shikimate kinase 2 (172 aa).

9–16 (GARAAGKT) serves as a coordination point for ATP.

It belongs to the shikimate kinase family.

The protein localises to the cytoplasm. It catalyses the reaction shikimate + ATP = 3-phosphoshikimate + ADP + H(+). The protein operates within metabolic intermediate biosynthesis; chorismate biosynthesis; chorismate from D-erythrose 4-phosphate and phosphoenolpyruvate: step 5/7. The protein is Shikimate kinase 2 of Syntrophotalea carbinolica (strain DSM 2380 / NBRC 103641 / GraBd1) (Pelobacter carbinolicus).